The sequence spans 225 residues: Enolase-phosphatase E1 (225 aa).

The protein belongs to the HAD-like hydrolase superfamily. MasA/MtnC family. Monomer. Requires Mg(2+) as cofactor.

The enzyme catalyses 5-methylsulfanyl-2,3-dioxopentyl phosphate + H2O = 1,2-dihydroxy-5-(methylsulfanyl)pent-1-en-3-one + phosphate. Its pathway is amino-acid biosynthesis; L-methionine biosynthesis via salvage pathway; L-methionine from S-methyl-5-thio-alpha-D-ribose 1-phosphate: step 3/6. It participates in amino-acid biosynthesis; L-methionine biosynthesis via salvage pathway; L-methionine from S-methyl-5-thio-alpha-D-ribose 1-phosphate: step 4/6. Its function is as follows. Bifunctional enzyme that catalyzes the enolization of 2,3-diketo-5-methylthiopentyl-1-phosphate (DK-MTP-1-P) into the intermediate 2-hydroxy-3-keto-5-methylthiopentenyl-1-phosphate (HK-MTPenyl-1-P), which is then dephosphorylated to form the acireductone 1,2-dihydroxy-3-keto-5-methylthiopentene (DHK-MTPene). This Pseudomonas aeruginosa (strain UCBPP-PA14) protein is Enolase-phosphatase E1.